A 306-amino-acid chain; its full sequence is Probable pinoresinol-lariciresinol reductase 3 (306 aa).

NADP(+) is bound by residues G14 to G20, R39, and K46. Catalysis depends on K131, which acts as the Proton acceptor. R135 is a binding site for NADP(+).

The protein belongs to the NmrA-type oxidoreductase family. Isoflavone reductase subfamily. In terms of assembly, dimer.

Functionally, probable reductase that might be involved in the reduction of lariciresinol into secoisolariciresinol. In most plant species, a single enzyme is able to reduce both pinoresinol and lariciresinol efficiently while in Arabidopsis, PRR1 and PRR2 show a strict substrate selectivity for pinoresinol. The sequence is that of Probable pinoresinol-lariciresinol reductase 3 (PLR3) from Arabidopsis thaliana (Mouse-ear cress).